The following is a 616-amino-acid chain: Protein NRT1/ PTR FAMILY 2.11 (616 aa).

The segment at 1–22 is disordered; sequence MERKPLELESTDNHQNPSSAVY. The next 12 membrane-spanning stretches (helical) occupy residues 59–79, 87–107, 118–138, 159–179, 205–225, 233–253, 349–369, 392–412, 435–455, 483–503, 519–539, and 566–586; these read FEKL…TAVF, ATII…AAFL, LSVA…TAAV, GGQI…AGGI, FFNW…TLVV, WTIG…IFFA, VKCI…YLTI, FVIP…VFIV, LQRI…AGFV, AMWL…AAIG, FAGS…SFLI, and LFYF…LVMS.

It belongs to the major facilitator superfamily. Proton-dependent oligopeptide transporter (POT/PTR) (TC 2.A.17) family. Expressed in roots. Detected in shoots, stems and flowers. Expressed in veins and in the root vasculature with highest expression in lateral branching points.

The protein resides in the cell membrane. In terms of biological role, high-affinity, proton-dependent glucosinolate-specific transporter. Involved in apoplasmic phloem-loading of glucosinolates and in bidirectional long-distance transport of aliphatic but not indole glucosinolates. May be involved in removal of glucosinolates from the xylem in roots. This Arabidopsis thaliana (Mouse-ear cress) protein is Protein NRT1/ PTR FAMILY 2.11 (NPF2.11).